A 432-amino-acid chain; its full sequence is Homogentisate 1,2-dioxygenase (432 aa).

His-286 (proton acceptor) is an active-site residue. Residues His-329 and Glu-335 each contribute to the Fe cation site. Homogentisate-binding residues include Tyr-344 and His-365. A Fe cation-binding site is contributed by His-365.

The protein belongs to the homogentisate dioxygenase family. As to quaternary structure, hexamer; dimer of trimers. Fe cation serves as cofactor.

The catalysed reaction is homogentisate + O2 = 4-maleylacetoacetate + H(+). Its pathway is amino-acid degradation; L-phenylalanine degradation; acetoacetate and fumarate from L-phenylalanine: step 4/6. Functionally, involved in the catabolism of homogentisate (2,5-dihydroxyphenylacetate or 2,5-OH-PhAc), a central intermediate in the degradation of phenylalanine and tyrosine. Catalyzes the oxidative ring cleavage of the aromatic ring of homogentisate to yield maleylacetoacetate. This is Homogentisate 1,2-dioxygenase from Bordetella bronchiseptica (strain ATCC BAA-588 / NCTC 13252 / RB50) (Alcaligenes bronchisepticus).